A 561-amino-acid polypeptide reads, in one-letter code: MNSSLTAQRRGSDAELGPWVMAARSKDAAPSQRDGLLPVKVEEDSPGSWEPNYPAASPDPETSRLHFRQLRYQEVAGPEEALSRLRELCRRWLRPELLSKEQILELLVLEQFLTILPEELQAWVREHCPESGEEAVAVVRALQRALDGTSSQGMVTFEDTAVSLTWEEWERLDPARRDFCRESAQKDSGSTVPPSLESRVENKELIPMQQILEEAEPQGQLQEAFQGKRPLFSKCGSTHEDRVEKQSGDPLPLKLENSPEAEGLNSISDVNKNGSIEGEDSKNNELQNSARCSNLVLCQHIPKAERPTDSEEHGNKCKQSFHMVTWHVLKPHKSDSGDSFHHSSLFETQRQLHEERPYKCGNCGKSFKQRSDLFRHQRIHTGEKPYGCQECGKSFSQSAALTKHQRTHTGEKPYTCLKCGERFRQNSHLNRHQSTHSRDKHFKCEECGETCHISNLFRHQRLHKGERPYKCEECEKSFKQRSDLFKHHRIHTGEKPYGCSVCGKRFNQSATLIKHQRIHTGEKPYKCLECGERFRQSTHLIRHQRIHQNKVLSAGRGGSRL.

The interval 1–61 (MNSSLTAQRR…NYPAASPDPE (61 aa)) is disordered. Phosphoserine is present on S12. Residue K40 forms a Glycyl lysine isopeptide (Lys-Gly) (interchain with G-Cter in SUMO2) linkage. The SCAN box domain occupies 64 to 146 (RLHFRQLRYQ…AVVRALQRAL (83 aa)). One can recognise a KRAB domain in the interval 155–230 (VTFEDTAVSL…LQEAFQGKRP (76 aa)). The segment at 182–201 (ESAQKDSGSTVPPSLESRVE) is disordered. Glycyl lysine isopeptide (Lys-Gly) (interchain with G-Cter in SUMO2) cross-links involve residues K203 and K228. The disordered stretch occupies residues 231–285 (LFSKCGSTHEDRVEKQSGDPLPLKLENSPEAEGLNSISDVNKNGSIEGEDSKNNE). A compositionally biased stretch (basic and acidic residues) spans 237-247 (STHEDRVEKQS). K254 participates in a covalent cross-link: Glycyl lysine isopeptide (Lys-Gly) (interchain with G-Cter in SUMO2). Positions 265–274 (NSISDVNKNG) are enriched in polar residues. K282 is covalently cross-linked (Glycyl lysine isopeptide (Lys-Gly) (interchain with G-Cter in SUMO2)). C2H2-type zinc fingers lie at residues 358-380 (YKCG…QRIH), 386-408 (YGCQ…QRTH), 414-436 (YTCL…QSTH), 442-463 (FKCE…QRLH), 469-491 (YKCE…HRIH), 497-519 (YGCS…QRIH), and 525-547 (YKCL…QRIH). Residue K443 forms a Glycyl lysine isopeptide (Lys-Gly) (interchain with G-Cter in SUMO2) linkage.

Belongs to the krueppel C2H2-type zinc-finger protein family.

The protein resides in the nucleus. In terms of biological role, may be involved in transcriptional regulation. The sequence is that of Zinc finger protein 394 (ZNF394) from Homo sapiens (Human).